Reading from the N-terminus, the 187-residue chain is MIEYVRGIIEDIGQDYVVIDFMGIGIKVFVPFSTLKVLPSKGNITKLYTYLQVREDGFQIFGFKTKEELDLFEKLLSVSGVGPKGALSILSVVSIDNFVKAVNAGDYKALTVAPGIGKKTAERIILELKDKLPKEIVFEGDNNFSNEALEALLALGYTKSEAIYALADITCDSVEDAVKQALKKLMK.

The tract at residues methionine 1–lysine 64 is domain I. Positions threonine 65 to isoleucine 136 are domain II. Residues isoleucine 136 to glutamate 139 are flexible linker. A domain III region spans residues glycine 140 to lysine 187.

Belongs to the RuvA family. In terms of assembly, homotetramer. Forms an RuvA(8)-RuvB(12)-Holliday junction (HJ) complex. HJ DNA is sandwiched between 2 RuvA tetramers; dsDNA enters through RuvA and exits via RuvB. An RuvB hexamer assembles on each DNA strand where it exits the tetramer. Each RuvB hexamer is contacted by two RuvA subunits (via domain III) on 2 adjacent RuvB subunits; this complex drives branch migration. In the full resolvosome a probable DNA-RuvA(4)-RuvB(12)-RuvC(2) complex forms which resolves the HJ.

The protein resides in the cytoplasm. In terms of biological role, the RuvA-RuvB-RuvC complex processes Holliday junction (HJ) DNA during genetic recombination and DNA repair, while the RuvA-RuvB complex plays an important role in the rescue of blocked DNA replication forks via replication fork reversal (RFR). RuvA specifically binds to HJ cruciform DNA, conferring on it an open structure. The RuvB hexamer acts as an ATP-dependent pump, pulling dsDNA into and through the RuvAB complex. HJ branch migration allows RuvC to scan DNA until it finds its consensus sequence, where it cleaves and resolves the cruciform DNA. In Thermoanaerobacter pseudethanolicus (strain ATCC 33223 / 39E) (Clostridium thermohydrosulfuricum), this protein is Holliday junction branch migration complex subunit RuvA.